Consider the following 180-residue polypeptide: Calcineurin subunit B type 1 (180 aa).

Glycine 2 carries the N-myristoyl glycine lipid modification. 4 EF-hand domains span residues 25-60 (AELKKLYRRFQMLDKDGSGTLTTDEFLSIPDLALNP), 62-92 (LERVIQIFDQNKDNEIEFFEFVGTLATLSHK), 94-129 (TKEDKLKFLFQIYDIDCDGFISNGELFQVLKMMVGT), and 135-170 (QLQQIVDKTIIEGDYDKDGKISFDEFIHMIGNQEGI). Ca(2+) contacts are provided by aspartate 38, aspartate 40, serine 42, threonine 44, glutamate 49, aspartate 70, asparagine 72, aspartate 74, glutamate 76, glutamate 81, aspartate 107, aspartate 109, aspartate 111, and glutamate 118. The canA/calcineurin A binding stretch occupies residues 138–143 (QIVDKT). Residues aspartate 148, aspartate 150, aspartate 152, lysine 154, and glutamate 159 each coordinate Ca(2+).

Belongs to the calcineurin regulatory subunit family. Forms a complex composed of a calmodulin-dependent catalytic subunit canA (also known as calcineurin A) and a regulatory Ca(2+)-binding subunit cnbA (also known as calcineurin B).

Functionally, regulatory subunit of calcineurin, a calcium-dependent, calmodulin stimulated protein phosphatase. Confers calcium sensitivity. Important for stalk formation. This chain is Calcineurin subunit B type 1 (cnbA), found in Dictyostelium discoideum (Social amoeba).